Here is a 440-residue protein sequence, read N- to C-terminus: tRNA-2-methylthio-N(6)-dimethylallyladenosine synthase (440 aa).

Residues 2-118 (PKYYIITYGC…LPKILESLDG (117 aa)) form the MTTase N-terminal domain. The [4Fe-4S] cluster site is built by Cys11, Cys47, Cys81, Cys155, Cys159, and Cys162. Residues 141–370 (RENKFQAWIP…ENLQRKIIYE (230 aa)) form the Radical SAM core domain. The region spanning 373–436 (LSRVGKEEIV…LWSLKGEVIR (64 aa)) is the TRAM domain.

This sequence belongs to the methylthiotransferase family. MiaB subfamily. In terms of assembly, monomer. The cofactor is [4Fe-4S] cluster.

It localises to the cytoplasm. It catalyses the reaction N(6)-dimethylallyladenosine(37) in tRNA + (sulfur carrier)-SH + AH2 + 2 S-adenosyl-L-methionine = 2-methylsulfanyl-N(6)-dimethylallyladenosine(37) in tRNA + (sulfur carrier)-H + 5'-deoxyadenosine + L-methionine + A + S-adenosyl-L-homocysteine + 2 H(+). Its function is as follows. Catalyzes the methylthiolation of N6-(dimethylallyl)adenosine (i(6)A), leading to the formation of 2-methylthio-N6-(dimethylallyl)adenosine (ms(2)i(6)A) at position 37 in tRNAs that read codons beginning with uridine. In Dictyoglomus thermophilum (strain ATCC 35947 / DSM 3960 / H-6-12), this protein is tRNA-2-methylthio-N(6)-dimethylallyladenosine synthase.